A 593-amino-acid chain; its full sequence is Arylsulfatase D (593 aa).

The N-terminal stretch at 1-33 is a signal peptide; the sequence is MRSAARRGRAAPAARDSLPVLLFLCLLLKTCEP. 2 residues coordinate Ca(2+): aspartate 49 and aspartate 50. A glycan (N-linked (GlcNAc...) asparagine) is linked at asparagine 61. Ca(2+) is bound at residue cysteine 89. Cysteine 89 acts as the Nucleophile in catalysis. Position 89 is a 3-oxoalanine (Cys) (cysteine 89). The N-linked (GlcNAc...) asparagine glycan is linked to asparagine 128. A substrate-binding site is contributed by lysine 148. The active site involves histidine 150. Residue histidine 304 participates in substrate binding. Residue asparagine 347 is glycosylated (N-linked (GlcNAc...) asparagine). Ca(2+) is bound by residues aspartate 356 and histidine 357. Lysine 381 is a binding site for substrate.

This sequence belongs to the sulfatase family. It depends on Ca(2+) as a cofactor. Post-translationally, the conversion to 3-oxoalanine (also known as C-formylglycine, FGly), of a serine or cysteine residue in prokaryotes and of a cysteine residue in eukaryotes, is critical for catalytic activity. In terms of tissue distribution, expressed in the pancreas, kidney, liver, lung, placenta, brain and heart.

The protein localises to the lysosome. The chain is Arylsulfatase D (ARSD) from Homo sapiens (Human).